Here is a 153-residue protein sequence, read N- to C-terminus: ATP synthase subunit b' (153 aa).

The helical transmembrane segment at 20–40 (TLPLMAVQVVLLTFILNALFF) threads the bilayer.

The protein belongs to the ATPase B chain family. In terms of assembly, F-type ATPases have 2 components, F(1) - the catalytic core - and F(0) - the membrane proton channel. F(1) has five subunits: alpha(3), beta(3), gamma(1), delta(1), epsilon(1). F(0) has four main subunits: a(1), b(1), b'(1) and c(10-14). The alpha and beta chains form an alternating ring which encloses part of the gamma chain. F(1) is attached to F(0) by a central stalk formed by the gamma and epsilon chains, while a peripheral stalk is formed by the delta, b and b' chains.

It localises to the cellular thylakoid membrane. Functionally, f(1)F(0) ATP synthase produces ATP from ADP in the presence of a proton or sodium gradient. F-type ATPases consist of two structural domains, F(1) containing the extramembraneous catalytic core and F(0) containing the membrane proton channel, linked together by a central stalk and a peripheral stalk. During catalysis, ATP synthesis in the catalytic domain of F(1) is coupled via a rotary mechanism of the central stalk subunits to proton translocation. In terms of biological role, component of the F(0) channel, it forms part of the peripheral stalk, linking F(1) to F(0). The b'-subunit is a diverged and duplicated form of b found in plants and photosynthetic bacteria. The polypeptide is ATP synthase subunit b' (Prochlorococcus marinus (strain MIT 9211)).